Consider the following 61-residue polypeptide: Large ribosomal subunit protein uL30 (61 aa).

Belongs to the universal ribosomal protein uL30 family. In terms of assembly, part of the 50S ribosomal subunit.

The polypeptide is Large ribosomal subunit protein uL30 (Treponema pallidum subsp. pallidum (strain SS14)).